The following is a 212-amino-acid chain: UPF0111 protein PH1389 (212 aa).

This sequence belongs to the UPF0111 family.

This is UPF0111 protein PH1389 from Pyrococcus horikoshii (strain ATCC 700860 / DSM 12428 / JCM 9974 / NBRC 100139 / OT-3).